Reading from the N-terminus, the 504-residue chain is U3 snoRNP-associated protein-like YAO (504 aa).

The disordered stretch occupies residues 1–120; the sequence is MKYNNEKKKG…DDDDDEDDDE (120 aa). The segment covering 20 to 33 has biased composition (basic and acidic residues); that stretch reads GSNERDPFFEEEPK. 2 stretches are compositionally biased toward acidic residues: residues 41 to 54 and 70 to 81; these read DDDD…DAEE and EVEDEDEFADET. Basic and acidic residues predominate over residues 89 to 106; sequence LAEEMLNRRREAMRRERE. Acidic residues predominate over residues 107–120; that stretch reads EADNDDDDDEDDDE. 7 WD repeats span residues 159–198, 220–259, 262–301, 304–342, 344–382, 413–452, and 456–496; these read KHRR…TDKY, NHSR…HVQA, GHRN…FITE, GHQG…RMIY, APAS…PVFV, SANS…IRPL, and PLTG…QNGV.

It belongs to the WD repeat RRP9 family. Expressed in tissues with active in cell division such as shoot apexes, root tips, lateral root primordia, embryos, endosperm, pollen grains and embryo sacs.

It localises to the nucleus. The protein resides in the nucleolus. In terms of biological role, component of a nucleolar small nuclear ribonucleoprotein particle (snoRNP) thought to participate in the processing and modification of pre-ribosomal RNA. Essential for embryogenesis. Plays a critical role in embryo sac development and gametic cell fate. Required for the correct positioning of the first division plane of zygote. May function during early embryogenesis. The protein is U3 snoRNP-associated protein-like YAO of Arabidopsis thaliana (Mouse-ear cress).